A 229-amino-acid chain; its full sequence is Uracil-DNA glycosylase (229 aa).

The active-site Proton acceptor is D67.

This sequence belongs to the uracil-DNA glycosylase (UDG) superfamily. UNG family.

The protein localises to the cytoplasm. It catalyses the reaction Hydrolyzes single-stranded DNA or mismatched double-stranded DNA and polynucleotides, releasing free uracil.. Its function is as follows. Excises uracil residues from the DNA which can arise as a result of misincorporation of dUMP residues by DNA polymerase or due to deamination of cytosine. This is Uracil-DNA glycosylase from Coxiella burnetii (strain CbuK_Q154) (Coxiella burnetii (strain Q154)).